Reading from the N-terminus, the 293-residue chain is Probable porphobilinogen deaminase (293 aa).

Cysteine 233 is subject to S-(dipyrrolylmethanemethyl)cysteine.

It belongs to the HMBS family. Requires dipyrromethane as cofactor.

The enzyme catalyses 4 porphobilinogen + H2O = hydroxymethylbilane + 4 NH4(+). It functions in the pathway porphyrin-containing compound metabolism; protoporphyrin-IX biosynthesis; coproporphyrinogen-III from 5-aminolevulinate: step 2/4. Its function is as follows. Tetrapolymerization of the monopyrrole PBG into the hydroxymethylbilane pre-uroporphyrinogen in several discrete steps. The polypeptide is Probable porphobilinogen deaminase (Saccharolobus islandicus (strain M.16.27) (Sulfolobus islandicus)).